We begin with the raw amino-acid sequence, 128 residues long: Ribonuclease P protein component (128 aa).

This sequence belongs to the RnpA family. In terms of assembly, consists of a catalytic RNA component (M1 or rnpB) and a protein subunit.

It catalyses the reaction Endonucleolytic cleavage of RNA, removing 5'-extranucleotides from tRNA precursor.. Its function is as follows. RNaseP catalyzes the removal of the 5'-leader sequence from pre-tRNA to produce the mature 5'-terminus. It can also cleave other RNA substrates such as 4.5S RNA. The protein component plays an auxiliary but essential role in vivo by binding to the 5'-leader sequence and broadening the substrate specificity of the ribozyme. The protein is Ribonuclease P protein component of Prochlorococcus marinus (strain MIT 9313).